The primary structure comprises 1180 residues: Integrin alpha-1 (1180 aa).

The first 28 residues, 1 to 28 (MVPRRPASLEVTVACIWLLTVILGFCVS), serve as a signal peptide directing secretion. Topologically, residues 29-1142 (FNVDVKNSMS…SKDGLPGRVP (1114 aa)) are extracellular. An FG-GAP 1 repeat occupies 30-91 (NVDVKNSMSF…CPVGRERAMP (62 aa)). A disulfide bridge links Cys82 with Cys92. N-linked (GlcNAc...) asparagine glycosylation is found at Asn100, Asn105, Asn112, Asn217, Asn317, Asn341, Asn402, Asn418, and Asn459. The stretch at 101–160 (TSIPNVTEIKENMTFGSTLVTNPNGGFLACGPLYAYRCGHLHYTTGICSDVSPTFQVVNS) is one FG-GAP 2 repeat. In terms of domain architecture, VWFA spans 175–364 (IVLDGSNSIY…LGERIFALEA (190 aa)). An FG-GAP 3 repeat occupies 365–417 (TADQSAASFEMEMSQTGFSAHYSQDWVMLGAVGAYDWNGTVVMQKANQMVIPH). 4 FG-GAP repeats span residues 422–474 (QTEP…DGNI), 475–537 (NILQ…RFEY), 556–614 (SCTK…TIRE), and 618–678 (QRIP…FEPN). Ca(2+) contacts are provided by Asp497, Asp499, Asp501, and Asp505. Asn531 carries an N-linked (GlcNAc...) asparagine glycan. Ca(2+) contacts are provided by Asp579, Asn581, Asp583, Asp587, Asp641, Asn643, Asp645, and Asp649. Cys687 and Cys696 are disulfide-bonded. 3 N-linked (GlcNAc...) asparagine glycosylation sites follow: Asn698, Asn747, and Asn779. Cys702 and Cys755 are oxidised to a cystine. Cys807 and Cys813 form a disulfide bridge. 8 N-linked (GlcNAc...) asparagine glycosylation sites follow: Asn820, Asn839, Asn882, Asn907, Asn938, Asn965, Asn973, and Asn1007. Cys877 and Cys885 are joined by a disulfide. 2 cysteine pairs are disulfide-bonded: Cys1029–Cys1062 and Cys1066–Cys1073. N-linked (GlcNAc...) asparagine glycosylation is found at Asn1084, Asn1103, and Asn1114. The chain crosses the membrane as a helical span at residues 1143-1165 (LWVILLSAFAGLLLLMLLILALW). Topologically, residues 1166 to 1180 (KIGFFKRPLKKKMEK) are cytoplasmic. A GFFKR motif motif is present at residues 1168–1172 (GFFKR).

It belongs to the integrin alpha chain family. As to quaternary structure, heterodimer of an alpha and a beta subunit. Alpha-1 associates with beta-1. Interacts with RAB21. Interacts (via cytoplasmic domain) with PTPN2; activates PTPN2 phosphatase activity towards EGFR and negatively regulates EGF signaling.

Its subcellular location is the membrane. Its function is as follows. Integrin alpha-1/beta-1 is a receptor for laminin and collagen. It recognizes the proline-hydroxylated sequence G-F-P-G-E-R in collagen. Involved in anchorage-dependent, negative regulation of EGF-stimulated cell growth. The polypeptide is Integrin alpha-1 (Itga1) (Rattus norvegicus (Rat)).